Consider the following 396-residue polypeptide: ATP-dependent RNA helicase eIF4A (396 aa).

The Q motif signature appears at 23-51 (DSFDEMNLKSELLRGIYAYGFERPSAIQQ). The Helicase ATP-binding domain maps to 54 to 224 (IMPVIKGHDV…TKFMRDPVRI (171 aa)). 67–74 (AQSGTGKT) provides a ligand contact to ATP. A DEAD box motif is present at residues 172-175 (DEAD). The region spanning 235–396 (GIKQFYIAVE…EMPMNVADLI (162 aa)) is the Helicase C-terminal domain.

This sequence belongs to the DEAD box helicase family. eIF4A subfamily. Component of the eIF4F complex, which composition varies with external and internal environmental conditions. It is composed of at least eIF4A, eIF4E and eIF4G.

It is found in the cytoplasm. The catalysed reaction is ATP + H2O = ADP + phosphate + H(+). Functionally, ATP-dependent RNA helicase which is a subunit of the eIF4F complex involved in cap recognition and is required for mRNA binding to ribosome. In the current model of translation initiation, eIF4A unwinds RNA secondary structures in the 5'-UTR of mRNAs which is necessary to allow efficient binding of the small ribosomal subunit, and subsequent scanning for the initiator codon. This chain is ATP-dependent RNA helicase eIF4A (TIF1), found in Pyricularia oryzae (strain 70-15 / ATCC MYA-4617 / FGSC 8958) (Rice blast fungus).